We begin with the raw amino-acid sequence, 476 residues long: tRNA (cytosine(72)-C(5))-methyltransferase NSUN6 (476 aa).

A PUA domain is found at 111 to 203 (QGEVIVGAQC…IGIRMTEPIY (93 aa)). S-adenosyl-L-methionine-binding positions include 242-248 (CAAPGGK), aspartate 266, aspartate 293, and aspartate 323. The active-site Nucleophile is the cysteine 373. Lysine 419 carries the N6-acetyllysine modification.

Belongs to the class I-like SAM-binding methyltransferase superfamily. RsmB/NOP family.

The protein resides in the cytoplasm. The catalysed reaction is cytidine(72) in tRNA(Thr) + S-adenosyl-L-methionine = 5-methylcytidine(72) in tRNA(Thr) + S-adenosyl-L-homocysteine + H(+). It carries out the reaction cytidine(72) in tRNA(Cys) + S-adenosyl-L-methionine = 5-methylcytidine(72) in tRNA(Cys) + S-adenosyl-L-homocysteine + H(+). Functionally, S-adenosyl-L-methionine-dependent methyltransferase that specifically methylates the C5 position of cytosine 72 in tRNA(Thr)(TGT) and tRNA(Cys)(GCA). In vitro also methylates tRNA(Thr)(AGT). Methylation requires, in the acceptor stem region, the presence of the 3'-CCA terminus, the target site C72, the discriminator base U73, and the second and third base pairs (2:71 and 3:70) in the tRNA substrates. The protein is tRNA (cytosine(72)-C(5))-methyltransferase NSUN6 of Mus musculus (Mouse).